A 342-amino-acid chain; its full sequence is Anthranilate phosphoribosyltransferase (342 aa).

5-phospho-alpha-D-ribose 1-diphosphate is bound by residues glycine 90, 93–94 (GS), threonine 98, 100–103 (NIST), 118–126 (KHGNRRATS), and serine 130. Glycine 90 lines the anthranilate pocket. Serine 102 lines the Mg(2+) pocket. An anthranilate-binding site is contributed by asparagine 121. Residue arginine 176 coordinates anthranilate. Mg(2+) contacts are provided by aspartate 235 and glutamate 236.

It belongs to the anthranilate phosphoribosyltransferase family. In terms of assembly, homodimer. Mg(2+) is required as a cofactor.

It carries out the reaction N-(5-phospho-beta-D-ribosyl)anthranilate + diphosphate = 5-phospho-alpha-D-ribose 1-diphosphate + anthranilate. It participates in amino-acid biosynthesis; L-tryptophan biosynthesis; L-tryptophan from chorismate: step 2/5. Catalyzes the transfer of the phosphoribosyl group of 5-phosphorylribose-1-pyrophosphate (PRPP) to anthranilate to yield N-(5'-phosphoribosyl)-anthranilate (PRA). The protein is Anthranilate phosphoribosyltransferase of Rhodopirellula baltica (strain DSM 10527 / NCIMB 13988 / SH1).